The sequence spans 2944 residues: Collagen alpha-1(VII) chain (2944 aa).

An N-terminal signal peptide occupies residues 1 to 24 (MRLRLLVAALCAAEILMGAPEVWA). Positions 18–1254 (GAPEVWAQPR…TGPCAVHCPK (1237 aa)) are nonhelical region (NC1). One can recognise a VWFA 1 domain in the interval 39–212 (DIVFLLDGSS…SILRTLLPLI (174 aa)). Fibronectin type-III domains lie at 235-330 (GPRD…TAKE), 331-417 (GLEL…TASS), 418-508 (VEQT…LEQL), 511-598 (PVMN…DPEA), 601-688 (VVPG…DPLG), 689-776 (PVRR…APEP), 779-867 (SVSK…PPAT), 870-957 (LLET…EPSH), and 959-1053 (PSTE…SHGP). A glycan (N-linked (GlcNAc...) asparagine) is linked at asparagine 338. N-linked (GlcNAc...) asparagine glycosylation occurs at asparagine 787. In terms of domain architecture, VWFA 2 spans 1055–1230 (DVVFLLHATR…PGLDRAVSDL (176 aa)). Asparagine 1110 carries N-linked (GlcNAc...) asparagine glycosylation. The Cell attachment site signature appears at 1171 to 1173 (RGD). Residues 1255–1475 (GQKGEPGVTG…GLRGAPGMTG (221 aa)) form an interrupted collagenous region region. The segment at 1255 to 2775 (GQKGEPGVTG…GPRGEKGEAA (1521 aa)) is triple-helical region. 2 disordered regions span residues 1259 to 1934 (EPGV…GSLP) and 1960 to 2773 (SSGS…EKGE). The segment covering 1338 to 1352 (RGPQGPKGEPGEPGQ) has biased composition (low complexity). The segment covering 1353 to 1363 (ITGGGGPGFPG) has biased composition (gly residues). Basic and acidic residues-rich tracts occupy residues 1397 to 1406 (KGDKGDRGER) and 1439 to 1448 (PGEKGEKGDC). The segment covering 1507 to 1518 (PGAAGHPGVEGP) has biased composition (low complexity). Basic and acidic residues-rich tracts occupy residues 1527-1536 (RRGEKGEPGR), 1627-1639 (RGRD…KGDE), and 1666-1680 (VGEK…EDGR). The span at 1813-1822 (PPGPPGPPGV) shows a compositional bias: pro residues. Composition is skewed to basic and acidic residues over residues 1846–1855 (EDGRKGEKGD), 1862–1871 (EGPDGPKGER), and 1968–1984 (PERR…RGPP). A Cell attachment site motif is present at residues 2002 to 2004 (RGD). The segment covering 2040–2049 (GRAGGSGEAG) has biased composition (gly residues). Positions 2050–2068 (RPGERGERGEKGERGDQGR) are enriched in basic and acidic residues. The Cell attachment site signature appears at 2063–2065 (RGD). Over residues 2074 to 2083 (LPGPPGPPGP) the composition is skewed to pro residues. Residues 2130–2140 (DVGEPGKRGHD) show a composition bias toward basic and acidic residues. 4-hydroxyproline is present on residues proline 2158, proline 2167, proline 2176, and proline 2179. Composition is skewed to low complexity over residues 2182-2197 (PGLA…SGLK), 2226-2241 (SGLV…PGQV), 2279-2299 (PKGE…PPGA), and 2306-2317 (PGDLAGALLGEP). Basic and acidic residues predominate over residues 2319 to 2335 (AKGDRGLPGPRGEKGEA). Low complexity predominate over residues 2414 to 2427 (ERGLAGPPGREGAP). Composition is skewed to basic and acidic residues over residues 2462–2477 (RGER…DGHP) and 2525–2544 (AKGD…KGPR). Low complexity predominate over residues 2576–2594 (PKGEPGAAGIPGEPGAPGK). The Cell attachment site signature appears at 2601-2603 (RGD). The segment covering 2615–2636 (LKGEKGIKGTCGRDGERGDKGE) has biased composition (basic and acidic residues). 5-hydroxylysine occurs at positions 2616 and 2622. Residues 2631–2633 (RGD) carry the Cell attachment site motif. Proline 2655, proline 2658, and proline 2664 each carry 4-hydroxyproline. Residues 2695-2704 (GPPGVGGFPG) are compositionally biased toward gly residues. Residues 2776–2944 (LTEDDIRDFV…GVHSQKTGAA (169 aa)) are nonhelical region (NC2). The BPTI/Kunitz inhibitor domain occupies 2879–2931 (CSLPLDEGSCTAYTLRWYHRAVPGGTACHPFVYGGCGGNANRFGTREACERRC). 3 disulfide bridges follow: cysteine 2879/cysteine 2931, cysteine 2888/cysteine 2914, and cysteine 2906/cysteine 2927.

Homotrimer. Interacts with MIA3/TANGO1; facilitating its loading into transport carriers and subsequent secretion. In terms of processing, prolines at the third position of the tripeptide repeating unit (G-X-Y) are hydroxylated in some or all of the chains.

It localises to the secreted. Its subcellular location is the extracellular space. It is found in the extracellular matrix. The protein localises to the basement membrane. Its function is as follows. Stratified squamous epithelial basement membrane protein that forms anchoring fibrils which may contribute to epithelial basement membrane organization and adherence by interacting with extracellular matrix (ECM) proteins such as type IV collagen. This chain is Collagen alpha-1(VII) chain, found in Mus musculus (Mouse).